The sequence spans 105 residues: Large ribosomal subunit protein uL24 (105 aa).

This sequence belongs to the universal ribosomal protein uL24 family. Part of the 50S ribosomal subunit.

Functionally, one of two assembly initiator proteins, it binds directly to the 5'-end of the 23S rRNA, where it nucleates assembly of the 50S subunit. In terms of biological role, one of the proteins that surrounds the polypeptide exit tunnel on the outside of the subunit. This chain is Large ribosomal subunit protein uL24, found in Vibrio parahaemolyticus serotype O3:K6 (strain RIMD 2210633).